We begin with the raw amino-acid sequence, 99 residues long: RNA-binding protein Hfq (99 aa).

A Sm domain is found at 9–68 (DPYLNALRRERIPVSIYLVNGIKLQGQIESFDQFVILLKNTVNQMVYKHAISTVVPARSV). Residues 67 to 99 (SVSHHNNNAQQQYQQQAAQAASAQSNETSSQAE) are disordered. Over residues 72–99 (NNNAQQQYQQQAAQAASAQSNETSSQAE) the composition is skewed to low complexity.

It belongs to the Hfq family. In terms of assembly, homohexamer.

RNA chaperone that binds small regulatory RNA (sRNAs) and mRNAs to facilitate mRNA translational regulation in response to envelope stress, environmental stress and changes in metabolite concentrations. Also binds with high specificity to tRNAs. This Actinobacillus succinogenes (strain ATCC 55618 / DSM 22257 / CCUG 43843 / 130Z) protein is RNA-binding protein Hfq.